Consider the following 233-residue polypeptide: Pre-hexon-linking protein VIII (233 aa).

Position 64 is a phosphothreonine; by host (T64). Positions A112 to S163 are excised as a propeptide. S180 carries the post-translational modification Phosphoserine; by host.

This sequence belongs to the adenoviridae hexon-linking protein family. In terms of assembly, interacts with the peripentonal hexons as well as the hexons in the facets. Part of a complex composed of the core-capsid bridging protein, the endosome lysis protein VI and the hexon-linking protein VIII; these interactions bridge the virus core to the capsid. Cleaved by the viral protease during virion maturation. May cause the middle segment to be shed from the capsid.

It localises to the virion. The protein resides in the host nucleus. Its function is as follows. Structural component of the virion that acts as a cement protein on the capsid interior and which glue the peripentonal hexons and group-of-nine hexons together. This Homo sapiens (Human) protein is Pre-hexon-linking protein VIII.